A 763-amino-acid polypeptide reads, in one-letter code: U3 small nucleolar RNA-associated protein 25 homolog (763 aa).

Residues 1–164 (MGKRRSRGRS…SQKSSEEFTD (164 aa)) are disordered. Promotes p53/TP53 degradation regions lie at residues 1-190 (MGKR…SQRT) and 580-642 (VQLP…KKEE). Phosphoserine is present on S10. Residues 25-43 (RDFGEEHPFYDRVSKKEVK) show a composition bias toward basic and acidic residues. 3 positions are modified to phosphoserine: S52, S60, and S64. A compositionally biased stretch (basic and acidic residues) spans 54–70 (DSSHSESESESEQEHVS). Acidic residues predominate over residues 84–119 (EEEEEEEEEEEEEEEDKEEVDDSAVGDSEMNGEDGG). Residues 643 to 704 (LNFTHICEYT…YELPTYAHFY (62 aa)) are represses p53/TP53 degradation.

The protein belongs to the UTP25 family. As to quaternary structure, interacts with CAPN3; the interaction is required for CAPN3 translocation to the nucleolus. Phosphorylated. Phosphorylation is required to promote p53/TP53 degradation in the nucleolus which promotes cell cycle progression and liver development.

It is found in the nucleus. It localises to the nucleolus. Its function is as follows. Component of the ribosomal small subunit processome for the biogenesis of ribosomes, functions in pre-ribosomal RNA (pre-rRNA) processing. Essential for embryonic development in part through the regulation of p53 pathway. Controls the expansion growth of digestive organs and liver. Also involved in the sympathetic neuronal development. Mediates, with CAPN3, the proteasome-independent degradation of p53/TP53. This Rattus norvegicus (Rat) protein is U3 small nucleolar RNA-associated protein 25 homolog.